The chain runs to 1033 residues: Calcium-transporting ATPase 3, plasma membrane-type (1033 aa).

At 1-180 the chain is on the cytoplasmic side; the sequence is MHSGVNGCCP…FVWEALEDTT (180 aa). 2 helical membrane-spanning segments follow: residues 181 to 201 and 204 to 224; these read LIIL…TEGW and GAHD…VTGT. Residues 225–268 lie on the Cytoplasmic side of the membrane; the sequence is SNYQQSLQFRDLDKEKRKILVQVTRNGLRQRVLIDDLLPGDAVH. Transmembrane regions (helical) follow at residues 269 to 289 and 362 to 382; these read LAVG…SVLV and IGKI…QGII. The Cytoplasmic portion of the chain corresponds to 383 to 405; sequence GQKYLDGLLLSWSGDDVLEILDH. Residues 406–426 traverse the membrane as a helical segment; it reads FAVAVTIVVVAVPEGLPLAVT. Asp461 (4-aspartylphosphate intermediate) is an active-site residue. Mg(2+) contacts are provided by Asp762 and Asp766. Residues 823–843 form a helical membrane-spanning segment; it reads FQLTVNVVALLVNFTSACFTG. Residues 844–846 are Cytoplasmic-facing; it reads DAP. Transmembrane regions (helical) follow at residues 847 to 867 and 928 to 948; these read LTAV…ALAL and IVLN…NEIS. At 949-965 the chain is on the cytoplasmic side; it reads SREMEDINVLRGMAGNS. A run of 2 helical transmembrane segments spans residues 966-986 and 999-1019; these read IFLG…QFLG and WLIS…IKLI. Over 1020–1033 the chain is Cytoplasmic; sequence AVEPHEKADTRRTP.

Belongs to the cation transport ATPase (P-type) (TC 3.A.3) family. Type IIB subfamily.

The protein resides in the membrane. It catalyses the reaction Ca(2+)(in) + ATP + H2O = Ca(2+)(out) + ADP + phosphate + H(+). Its activity is regulated as follows. Activated by calmodulin. Its function is as follows. This magnesium-dependent enzyme catalyzes the hydrolysis of ATP coupled with the translocation of calcium from the cytosol out of the cell, into the endoplasmic reticulum, or into organelles. The protein is Calcium-transporting ATPase 3, plasma membrane-type of Oryza sativa subsp. japonica (Rice).